We begin with the raw amino-acid sequence, 326 residues long: 5-dehydro-2-deoxygluconokinase (326 aa).

This sequence belongs to the carbohydrate kinase PfkB family.

The enzyme catalyses 5-dehydro-2-deoxy-D-gluconate + ATP = 6-phospho-5-dehydro-2-deoxy-D-gluconate + ADP + H(+). It functions in the pathway polyol metabolism; myo-inositol degradation into acetyl-CoA; acetyl-CoA from myo-inositol: step 5/7. Its function is as follows. Catalyzes the phosphorylation of 5-dehydro-2-deoxy-D-gluconate (2-deoxy-5-keto-D-gluconate or DKG) to 6-phospho-5-dehydro-2-deoxy-D-gluconate (DKGP). In Shouchella clausii (strain KSM-K16) (Alkalihalobacillus clausii), this protein is 5-dehydro-2-deoxygluconokinase.